The following is a 315-amino-acid chain: Dihydroorotate dehydrogenase (fumarate) (315 aa).

Substrate contacts are provided by residues Lys-46, 70–74, and Asn-130; that span reads NSMGL. 46 to 47 provides a ligand contact to FMN; it reads KS. An FMN-binding site is contributed by Asn-130. The active-site Nucleophile is Cys-133. FMN contacts are provided by Lys-167 and Ile-195. 196 to 197 provides a ligand contact to substrate; it reads NS. Residues Gly-224, 252–253, and 274–275 contribute to the FMN site; these read GG and GT.

The protein belongs to the dihydroorotate dehydrogenase family. Type 1 subfamily. As to quaternary structure, homodimer. FMN serves as cofactor.

Its subcellular location is the cytoplasm. The enzyme catalyses (S)-dihydroorotate + fumarate = orotate + succinate. It functions in the pathway pyrimidine metabolism; UMP biosynthesis via de novo pathway. Functionally, catalyzes the conversion of dihydroorotate to orotate with fumarate as the electron acceptor. The chain is Dihydroorotate dehydrogenase (fumarate) (URA1) from Kluyveromyces lactis (strain ATCC 8585 / CBS 2359 / DSM 70799 / NBRC 1267 / NRRL Y-1140 / WM37) (Yeast).